Here is a 125-residue protein sequence, read N- to C-terminus: Cu-Zn superoxide dismutase-like protein OPG175 (125 aa).

A disulfide bridge links C52 with C102.

It belongs to the Cu-Zn superoxide dismutase family.

It is found in the virion. The protein localises to the host cytoplasm. Superoxide dismutase-like protein with no enzymatic activity. The polypeptide is Cu-Zn superoxide dismutase-like protein OPG175 (OPG175) (Vaccinia virus (strain Western Reserve) (VACV)).